Reading from the N-terminus, the 375-residue chain is Probable aspartate aminotransferase (375 aa).

Residues Gly-31 and Asn-165 each coordinate L-aspartate. The residue at position 223 (Lys-223) is an N6-(pyridoxal phosphate)lysine. Arg-353 is an L-aspartate binding site.

This sequence belongs to the class-I pyridoxal-phosphate-dependent aminotransferase family. In terms of assembly, homodimer. Pyridoxal 5'-phosphate is required as a cofactor.

Its subcellular location is the cytoplasm. It catalyses the reaction L-aspartate + 2-oxoglutarate = oxaloacetate + L-glutamate. This chain is Probable aspartate aminotransferase, found in Methanocaldococcus jannaschii (strain ATCC 43067 / DSM 2661 / JAL-1 / JCM 10045 / NBRC 100440) (Methanococcus jannaschii).